The sequence spans 487 residues: Cysteine--tRNA ligase (487 aa).

Cys30 is a Zn(2+) binding site. The 'HIGH' region signature appears at 32–42 (PTVYGHAHLGH). 3 residues coordinate Zn(2+): Cys226, His251, and Glu255. Positions 283–287 (KMGKS) match the 'KMSKS' region motif. Lys286 contributes to the ATP binding site.

The protein belongs to the class-I aminoacyl-tRNA synthetase family. As to quaternary structure, monomer. Requires Zn(2+) as cofactor.

The protein localises to the cytoplasm. The enzyme catalyses tRNA(Cys) + L-cysteine + ATP = L-cysteinyl-tRNA(Cys) + AMP + diphosphate. The chain is Cysteine--tRNA ligase (cysS) from Chlorobaculum tepidum (strain ATCC 49652 / DSM 12025 / NBRC 103806 / TLS) (Chlorobium tepidum).